We begin with the raw amino-acid sequence, 776 residues long: Zinc finger CCCH-type antiviral protein 1 (776 aa).

The residue at position 2 (Ala2) is an N-acetylalanine. The tract at residues 2 to 254 is N-terminal domain; that stretch reads ADPGVCCFIT…DRSKSRDRFL (253 aa). The Nuclear localization signal signature appears at 69-76; sequence RARVCRRK. C3H1-type zinc fingers lie at residues 73-86, 88-110, 150-172, and 169-193; these read CRRKYCQRPCDSLH, CKLNLLGRCHYAQSQRNLCKYSH, CKSYKGEGRKQTCGQPQPCERLH, and ERLHICEHFTRGNCSYLNCLRSHNL. The segment at 221–249 is disordered; that stretch reads NKHARRNPPGTRAAHPHRRGGAHRDRSKS. A binding to EXOSC5 region spans residues 224-254; that stretch reads ARRNPPGTRAAHPHRRGGAHRDRSKSRDRFL. Residues Ser257, Ser262, Ser266, and Ser270 each carry the phosphoserine; by GSK3-beta modification. Position 274 is a phosphoserine (Ser274). Thr278 carries the phosphothreonine modification. The residue at position 283 (Ser283) is a Phosphoserine. Residues 284 to 291 carry the Nuclear export signal motif; the sequence is LEDVSVDV. The interval 308–355 is disordered; that stretch reads PVSSKAAGVQGPSQMRASQEFSEDGNLDDIFSRNRSDSSSSRASAAKV. Residues 318–327 show a composition bias toward polar residues; it reads GPSQMRASQE. 3 positions are modified to phosphoserine: Ser325, Ser351, and Ser398. Residues 344-353 show a composition bias toward low complexity; the sequence is DSSSSRASAA. A Nuclear localization signal motif is present at residues 405-406; that stretch reads KK. A disordered region spans residues 457–483; sequence WASASTHNAPNGSSQIMDETPNVSKSS. Over residues 459 to 483 the composition is skewed to polar residues; sequence SASTHNAPNGSSQIMDETPNVSKSS. Residue Tyr501 is modified to Phosphotyrosine. The disordered stretch occupies residues 512 to 562; the sequence is LAVPGEATTPVQSNRLPQSPLSSSSHRAAASGSPGKNSTHTSVSPAIESSR. Residues 523–546 are compositionally biased toward low complexity; that stretch reads QSNRLPQSPLSSSSHRAAASGSPG. 2 positions are modified to phosphoserine: Ser544 and Ser667. Residues 671-758 enclose the WWE domain; that stretch reads YEEKPLSAVF…ASKTQRHVVR (88 aa).

It belongs to the ARTD/PARP family. As to quaternary structure, homodimer or homooligomer. Homooligomerization is essential for its antiviral activity. Interacts with EXOSC5. Interacts with EXOSC3, EXOSC7, DCP2 and DCP1A. Interacts with PARN in an RNA-independent manner. Interacts with XRN1 in an RNA-dependent manner. Interacts (via N-terminal domain) with DHX30 (via N-terminus) in an RNA-independent manner. Interacts (via N-terminal domain) with DDX17 in an RNA-independent manner. Post-translationally, phosphorylation at Ser-274 is essential for sequential phosphorylation of Ser-270, Ser-266, Ser-262 and Ser-257 by GSK3-beta. Phosphorylation by GSK3-beta enhances its antiviral activity. As to expression, expressed in the kidney and liver.

Its subcellular location is the cytoplasm. It is found in the nucleus. Its function is as follows. Antiviral protein which inhibits the replication of viruses by recruiting the cellular RNA degradation machineries to degrade the viral mRNAs. Binds to a ZAP-responsive element (ZRE) present in the target viral mRNA, recruits cellular poly(A)-specific ribonuclease PARN to remove the poly(A) tail, and the 3'-5' exoribonuclease complex exosome to degrade the RNA body from the 3'-end. It also recruits the decapping complex DCP1-DCP2 through RNA helicase p72 (DDX17) to remove the cap structure of the viral mRNA to initiate its degradation from the 5'-end. Its target viruses belong to families which include retroviridae: human immunodeficiency virus type 1 (HIV-1) and moloney and murine leukemia virus (MoMLV), filoviridae: ebola virus (EBOV) and marburg virus (MARV), togaviridae: sindbis virus (SINV) and Ross river virus (RRV). Specifically targets the multiply spliced but not unspliced or singly spliced HIV-1 mRNAs for degradation. In Rattus norvegicus (Rat), this protein is Zinc finger CCCH-type antiviral protein 1 (Zc3hav1).